We begin with the raw amino-acid sequence, 308 residues long: Phosphoribosylaminoimidazole-succinocarboxamide synthase (308 aa).

This sequence belongs to the SAICAR synthetase family.

It catalyses the reaction 5-amino-1-(5-phospho-D-ribosyl)imidazole-4-carboxylate + L-aspartate + ATP = (2S)-2-[5-amino-1-(5-phospho-beta-D-ribosyl)imidazole-4-carboxamido]succinate + ADP + phosphate + 2 H(+). It functions in the pathway purine metabolism; IMP biosynthesis via de novo pathway; 5-amino-1-(5-phospho-D-ribosyl)imidazole-4-carboxamide from 5-amino-1-(5-phospho-D-ribosyl)imidazole-4-carboxylate: step 1/2. The protein is Phosphoribosylaminoimidazole-succinocarboxamide synthase of Xanthomonas oryzae pv. oryzae (strain PXO99A).